The chain runs to 201 residues: Recombination protein RecR (201 aa).

The C4-type zinc finger occupies 60-75 (CSRCFHFTDAEECSIC). The Toprim domain occupies 83–178 (GEICVVETTA…RVSRIAYGIP (96 aa)).

This sequence belongs to the RecR family.

In terms of biological role, may play a role in DNA repair. It seems to be involved in an RecBC-independent recombinational process of DNA repair. It may act with RecF and RecO. This Syntrophobacter fumaroxidans (strain DSM 10017 / MPOB) protein is Recombination protein RecR.